The chain runs to 185 residues: UPF0669 protein C6orf120 homolog (185 aa).

Positions 1–23 (MATPWRRALLMILASQVVTLVKC) are cleaved as a signal peptide. Residue Asn47 is glycosylated (N-linked (GlcNAc...) asparagine).

The protein belongs to the UPF0669 family.

The protein localises to the secreted. Its function is as follows. May be involved in induction of apoptosis in CD4(+) T-cells, but not CD8(+) T-cells or hepatocytes. This chain is UPF0669 protein C6orf120 homolog, found in Mus musculus (Mouse).